We begin with the raw amino-acid sequence, 202 residues long: Superoxide dismutase [Mn], mitochondrial (202 aa).

The N-terminal 5 residues, 1–5, are a transit peptide targeting the mitochondrion; the sequence is HGRGM. His31 provides a ligand contact to Mn(2+). Position 39 is a 3'-nitrotyrosine (Tyr39). An N6-acetyllysine; alternate modification is found at Lys49. Lys49 carries the N6-succinyllysine; alternate modification. His79 contacts Mn(2+). Lys95 is subject to N6-acetyllysine. Lys103 and Lys111 each carry N6-acetyllysine; alternate. N6-succinyllysine; alternate occurs at positions 103 and 111. Positions 164 and 168 each coordinate Mn(2+). Lys183 carries the N6-acetyllysine modification.

Belongs to the iron/manganese superoxide dismutase family. As to quaternary structure, homotetramer. Requires Mn(2+) as cofactor. Post-translationally, nitrated under oxidative stress. Nitration coupled with oxidation inhibits the catalytic activity. In terms of processing, acetylation at Lys-122 decreases enzymatic activity. Deacetylated by SIRT3 upon exposure to ionizing radiations or after long fasting. Polyubiquitinated; leading to proteasomal degradation. Deubiquitinated by USP36 which increases protein stability.

The protein localises to the mitochondrion matrix. It catalyses the reaction 2 superoxide + 2 H(+) = H2O2 + O2. Functionally, destroys superoxide anion radicals which are normally produced within the cells and which are toxic to biological systems. This is Superoxide dismutase [Mn], mitochondrial (SOD2) from Oryctolagus cuniculus (Rabbit).